A 226-amino-acid polypeptide reads, in one-letter code: MAITDWPEGERPRERLLAHGPAALSDAELLAIYLRVGVRGKSAVDLARDLLHRFDGRLGTLAEASLEELASVSGIGMAKAAQLKASFELTRRALSQEMATRDSFTSPGKVRDWLRLKLASRGHEVFMALWLDAQNQLLKAEELFTGTLTQTSVYPREVVKAALAHNAAAVILAHNHPSGIAEPSRADEMLTRSLKEALAMVDVKVLDHFIVAGNTPPLSFAERGLL.

One can recognise an MPN domain in the interval Ser-103 to Leu-226. Zn(2+)-binding residues include His-174, His-176, and Asp-187. The JAMM motif motif lies at His-174–Asp-187.

It belongs to the UPF0758 family.

The polypeptide is UPF0758 protein Daro_3142 (Dechloromonas aromatica (strain RCB)).